A 421-amino-acid polypeptide reads, in one-letter code: ATP-dependent RNA helicase RhlB (421 aa).

The short motif at 9–37 (QKFSDFALHPKVVEVLEKKGFHNCTPIQA) is the Q motif element. Residues 40 to 219 (LPLTLAGRDV…FEQMNNAEYI (180 aa)) enclose the Helicase ATP-binding domain. Position 53–60 (53–60 (AQTGTGKT)) interacts with ATP. The DEAD box signature appears at 165–168 (DEAD). Residues 245–390 (RLLQTLIEEE…VSKYNPDALM (146 aa)) enclose the Helicase C-terminal domain. A disordered region spans residues 392–421 (DLPKPLRLTRPRTGNGPRRTGAPRNRRRSG). Positions 402 to 414 (PRTGNGPRRTGAP) are enriched in low complexity.

The protein belongs to the DEAD box helicase family. RhlB subfamily. In terms of assembly, component of the RNA degradosome, which is a multiprotein complex involved in RNA processing and mRNA degradation.

It is found in the cytoplasm. The enzyme catalyses ATP + H2O = ADP + phosphate + H(+). Functionally, DEAD-box RNA helicase involved in RNA degradation. Has RNA-dependent ATPase activity and unwinds double-stranded RNA. In Shigella boydii serotype 18 (strain CDC 3083-94 / BS512), this protein is ATP-dependent RNA helicase RhlB.